The following is a 374-amino-acid chain: Carbamoyl phosphate synthase small chain (374 aa).

Positions 1-185 (MKAILALEDG…DVSSGYKWSD (185 aa)) are CPSase. Positions 45, 237, and 239 each coordinate L-glutamine. The region spanning 189-374 (RLVLVDYGVK…RNLVKDATGK (186 aa)) is the Glutamine amidotransferase type-1 domain. Catalysis depends on cysteine 264, which acts as the Nucleophile. Leucine 265, glutamine 268, asparagine 306, glycine 308, and phenylalanine 309 together coordinate L-glutamine. Catalysis depends on residues histidine 347 and glutamate 349.

This sequence belongs to the CarA family. In terms of assembly, composed of two chains; the small (or glutamine) chain promotes the hydrolysis of glutamine to ammonia, which is used by the large (or ammonia) chain to synthesize carbamoyl phosphate. Tetramer of heterodimers (alpha,beta)4.

It carries out the reaction hydrogencarbonate + L-glutamine + 2 ATP + H2O = carbamoyl phosphate + L-glutamate + 2 ADP + phosphate + 2 H(+). It catalyses the reaction L-glutamine + H2O = L-glutamate + NH4(+). Its pathway is amino-acid biosynthesis; L-arginine biosynthesis; carbamoyl phosphate from bicarbonate: step 1/1. It participates in pyrimidine metabolism; UMP biosynthesis via de novo pathway; (S)-dihydroorotate from bicarbonate: step 1/3. Small subunit of the glutamine-dependent carbamoyl phosphate synthetase (CPSase). CPSase catalyzes the formation of carbamoyl phosphate from the ammonia moiety of glutamine, carbonate, and phosphate donated by ATP, constituting the first step of 2 biosynthetic pathways, one leading to arginine and/or urea and the other to pyrimidine nucleotides. The small subunit (glutamine amidotransferase) binds and cleaves glutamine to supply the large subunit with the substrate ammonia. The polypeptide is Carbamoyl phosphate synthase small chain (Maridesulfovibrio salexigens (strain ATCC 14822 / DSM 2638 / NCIMB 8403 / VKM B-1763) (Desulfovibrio salexigens)).